A 749-amino-acid chain; its full sequence is Fibronectin type III and SPRY domain-containing protein 2 (749 aa).

A coiled-coil region spans residues 205 to 317 (LNEALESAKD…TIEEMCHEEK (113 aa)). 2 Fibronectin type-III domains span residues 375-470 (PVIN…TAPS) and 471-564 (PPII…TIGS). In terms of domain architecture, B30.2/SPRY spans 546-744 (NMGGPSVRSE…KVHNGISMPK (199 aa)).

As to quaternary structure, interacts with CMYA5. In cardiac muscles, identified in a complex composed of FSD2, CMYA5 and RYR2.

It is found in the nucleus. The protein localises to the sarcoplasmic reticulum. It localises to the cytoplasm. The protein resides in the perinuclear region. The protein is Fibronectin type III and SPRY domain-containing protein 2 (FSD2) of Homo sapiens (Human).